The primary structure comprises 334 residues: Holliday junction branch migration complex subunit RuvB (334 aa).

Residues 1–182 (MDDRMVDQSM…FGVHLRLEYY (182 aa)) form a large ATPase domain (RuvB-L) region. ATP contacts are provided by residues Leu-21, Arg-22, Gly-63, Lys-66, Thr-67, Thr-68, 129 to 131 (EDF), Arg-172, Tyr-182, and Arg-219. Thr-67 serves as a coordination point for Mg(2+). The interval 183–253 (QELELKEIIV…TTRASLQLLQ (71 aa)) is small ATPAse domain (RuvB-S). The tract at residues 256–334 (DEGLDYIDHK…HFSKKNGKKE (79 aa)) is head domain (RuvB-H). DNA contacts are provided by Arg-292, Arg-311, and Arg-316.

The protein belongs to the RuvB family. As to quaternary structure, homohexamer. Forms an RuvA(8)-RuvB(12)-Holliday junction (HJ) complex. HJ DNA is sandwiched between 2 RuvA tetramers; dsDNA enters through RuvA and exits via RuvB. An RuvB hexamer assembles on each DNA strand where it exits the tetramer. Each RuvB hexamer is contacted by two RuvA subunits (via domain III) on 2 adjacent RuvB subunits; this complex drives branch migration. In the full resolvosome a probable DNA-RuvA(4)-RuvB(12)-RuvC(2) complex forms which resolves the HJ.

The protein resides in the cytoplasm. It catalyses the reaction ATP + H2O = ADP + phosphate + H(+). Functionally, the RuvA-RuvB-RuvC complex processes Holliday junction (HJ) DNA during genetic recombination and DNA repair, while the RuvA-RuvB complex plays an important role in the rescue of blocked DNA replication forks via replication fork reversal (RFR). RuvA specifically binds to HJ cruciform DNA, conferring on it an open structure. The RuvB hexamer acts as an ATP-dependent pump, pulling dsDNA into and through the RuvAB complex. RuvB forms 2 homohexamers on either side of HJ DNA bound by 1 or 2 RuvA tetramers; 4 subunits per hexamer contact DNA at a time. Coordinated motions by a converter formed by DNA-disengaged RuvB subunits stimulates ATP hydrolysis and nucleotide exchange. Immobilization of the converter enables RuvB to convert the ATP-contained energy into a lever motion, pulling 2 nucleotides of DNA out of the RuvA tetramer per ATP hydrolyzed, thus driving DNA branch migration. The RuvB motors rotate together with the DNA substrate, which together with the progressing nucleotide cycle form the mechanistic basis for DNA recombination by continuous HJ branch migration. Branch migration allows RuvC to scan DNA until it finds its consensus sequence, where it cleaves and resolves cruciform DNA. The chain is Holliday junction branch migration complex subunit RuvB from Staphylococcus saprophyticus subsp. saprophyticus (strain ATCC 15305 / DSM 20229 / NCIMB 8711 / NCTC 7292 / S-41).